A 308-amino-acid polypeptide reads, in one-letter code: Mitochondrial import receptor subunit TOM40B (308 aa).

Residues M1–S29 form a disordered region. The segment at P281–G308 is required for mitochondrial targeting.

Belongs to the Tom40 family. Forms part of the preprotein translocase of the outer mitochondrial membrane (TOM complex) containing TOMM22, TOMM40, TOMM40L and TOMM70. Interacts with mitochondrial targeting sequences.

It localises to the mitochondrion outer membrane. Its function is as follows. Potential channel-forming protein implicated in import of protein precursors into mitochondria. The chain is Mitochondrial import receptor subunit TOM40B from Bos taurus (Bovine).